The primary structure comprises 259 residues: NAD kinase (259 aa).

The Proton acceptor role is filled by aspartate 43. Residues 43–44, 111–112, and arginine 136 contribute to the NAD(+) site; these read DG and NE.

The protein belongs to the NAD kinase family. A divalent metal cation is required as a cofactor.

It localises to the cytoplasm. The catalysed reaction is NAD(+) + ATP = ADP + NADP(+) + H(+). In terms of biological role, involved in the regulation of the intracellular balance of NAD and NADP, and is a key enzyme in the biosynthesis of NADP. Catalyzes specifically the phosphorylation on 2'-hydroxyl of the adenosine moiety of NAD to yield NADP. The sequence is that of NAD kinase from Mycoplasma genitalium (strain ATCC 33530 / DSM 19775 / NCTC 10195 / G37) (Mycoplasmoides genitalium).